A 437-amino-acid chain; its full sequence is GTPase HflX (437 aa).

Residues 150-173 (DRQGGGSGGGKGGGGAARGEGEKQ) form a disordered region. Residues 152-167 (QGGGSGGGKGGGGAAR) are compositionally biased toward gly residues. The Hflx-type G domain occupies 212–382 (ATAAIVGYTN…ACVEMLESRV (171 aa)). GTP is bound by residues 218–225 (GYTNAGKS), 243–247 (FATLD), 265–268 (DTVG), 331–334 (NKVD), and 360–362 (SVK). 2 residues coordinate Mg(2+): serine 225 and threonine 245.

Belongs to the TRAFAC class OBG-HflX-like GTPase superfamily. HflX GTPase family. In terms of assembly, monomer. Associates with the 50S ribosomal subunit. The cofactor is Mg(2+).

It localises to the cytoplasm. GTPase that associates with the 50S ribosomal subunit and may have a role during protein synthesis or ribosome biogenesis. The polypeptide is GTPase HflX (Akkermansia muciniphila (strain ATCC BAA-835 / DSM 22959 / JCM 33894 / BCRC 81048 / CCUG 64013 / CIP 107961 / Muc)).